The primary structure comprises 582 residues: Hemagglutinin-neuraminidase (582 aa).

Residues 35–55 (ILVLSVQAVTLILVIVTLGEL) traverse the membrane as a helical segment. 3 disulfide bridges follow: Cys-178–Cys-202, Cys-192–Cys-253, and Cys-244–Cys-257. Residues Asn-284 and Asn-329 are each glycosylated (N-linked (GlcNAc...) asparagine; by host). Intrachain disulfides connect Cys-350/Cys-471, Cys-382/Cys-392, and Cys-465/Cys-475. Residues Asn-400 and Asn-448 are each glycosylated (N-linked (GlcNAc...) asparagine; by host). Asn-507 carries N-linked (GlcNAc...) asparagine; by host glycosylation. The cysteines at positions 545 and 556 are disulfide-linked.

This sequence belongs to the paramyxoviruses hemagglutinin-neuraminidase family. Homodimer. Further forms homotetramer (dimer of dimers). Interacts with F protein trimer.

Its subcellular location is the virion membrane. It localises to the host cell membrane. The enzyme catalyses Hydrolysis of alpha-(2-&gt;3)-, alpha-(2-&gt;6)-, alpha-(2-&gt;8)- glycosidic linkages of terminal sialic acid residues in oligosaccharides, glycoproteins, glycolipids, colominic acid and synthetic substrates.. Attaches the virus to alpha-2,3-linked sialic acid-containing cell receptors and thereby initiating infection. Binding of HN protein to the receptor induces a conformational change that allows the F protein to trigger virion/cell membranes fusion. Binds to the glycan motifs sialyl Lewis (SLe) and GM2 ganglioside (GM2-glycan). In terms of biological role, neuraminidase activity ensures the efficient spread of the virus by dissociating the mature virions from the neuraminic acid containing glycoproteins. The polypeptide is Hemagglutinin-neuraminidase (HN) (Homo sapiens (Human)).